A 1682-amino-acid chain; its full sequence is 1-phosphatidylinositol 4,5-bisphosphate phosphodiesterase eta-1 (1682 aa).

The PH domain maps to 20-128 (SVMQSGTQMI…WITGLKYLMA (109 aa)). EF-hand domains lie at 142–177 (THDQ…LNVN), 178–214 (LPRR…MSLR), and 226–246 (DKKD…EQKM). Residues aspartate 155, asparagine 157, aspartate 159, and glutamate 166 each contribute to the Ca(2+) site. The 146-residue stretch at 299–444 (QDMDQPLCNY…LKGKILVKGK (146 aa)) folds into the PI-PLC X-box domain. Histidine 314 is an active-site residue. Positions 315, 344, and 346 each coordinate Ca(2+). Histidine 358 is a catalytic residue. Ca(2+) is bound at residue glutamate 393. Substrate is bound by residues lysine 442 and lysine 444. The interval 534–588 (LDVKESGKKSHGRSLMANFGKHKQKATKSRSKSYSTDDEDDSLQNPGKEGGQLYR) is disordered. A compositionally biased stretch (basic residues) spans 553–564 (GKHKQKATKSRS). In terms of domain architecture, PI-PLC Y-box spans 602 to 715 (LSDLVVYTNS…GYILKPQQMC (114 aa)). 2 residues coordinate substrate: serine 628 and arginine 655. Positions 716–844 (KGTFNPFSGD…PGYRHVYLEG (129 aa)) constitute a C2 domain. Positions 759, 761, 785, 814, 815, and 816 each coordinate Ca(2+). The span at 992–1018 (DTDGKENCLAGDKDDRRKGAATRKDPH) shows a compositional bias: basic and acidic residues. Disordered regions lie at residues 992–1083 (DTDG…LSPR), 1296–1321 (NLPG…HSQV), and 1581–1603 (RAKE…GGVV). Residues 1019-1033 (FSNFNKKLSSSSSAL) show a composition bias toward low complexity. Polar residues-rich tracts occupy residues 1040-1050 (QGPTASVSNPE) and 1065-1074 (NMTNDCQENH). Basic and acidic residues predominate over residues 1581–1590 (RAKEKQEAGK).

Ca(2+) serves as cofactor. Expressed in brain and to a lower extent in lung. In brain, it is found in cerebrum, cerebellum and spinal cord.

Its subcellular location is the cytoplasm. The protein resides in the membrane. The catalysed reaction is a 1,2-diacyl-sn-glycero-3-phospho-(1D-myo-inositol-4,5-bisphosphate) + H2O = 1D-myo-inositol 1,4,5-trisphosphate + a 1,2-diacyl-sn-glycerol + H(+). Its function is as follows. The production of the second messenger molecules diacylglycerol (DAG) and inositol 1,4,5-trisphosphate (IP3) is mediated by calcium-activated phosphatidylinositol-specific phospholipase C enzymes. The protein is 1-phosphatidylinositol 4,5-bisphosphate phosphodiesterase eta-1 of Mus musculus (Mouse).